We begin with the raw amino-acid sequence, 251 residues long: Triosephosphate isomerase (251 aa).

Position 10 to 12 (10 to 12 (NWK)) interacts with substrate. His-95 serves as the catalytic Electrophile. The active-site Proton acceptor is the Glu-167. Substrate contacts are provided by residues Gly-173, Ser-213, and 234–235 (GG).

The protein belongs to the triosephosphate isomerase family. As to quaternary structure, homodimer.

The protein resides in the cytoplasm. It carries out the reaction D-glyceraldehyde 3-phosphate = dihydroxyacetone phosphate. The protein operates within carbohydrate biosynthesis; gluconeogenesis. It participates in carbohydrate degradation; glycolysis; D-glyceraldehyde 3-phosphate from glycerone phosphate: step 1/1. Involved in the gluconeogenesis. Catalyzes stereospecifically the conversion of dihydroxyacetone phosphate (DHAP) to D-glyceraldehyde-3-phosphate (G3P). The polypeptide is Triosephosphate isomerase (Acetivibrio thermocellus (strain ATCC 27405 / DSM 1237 / JCM 9322 / NBRC 103400 / NCIMB 10682 / NRRL B-4536 / VPI 7372) (Clostridium thermocellum)).